A 148-amino-acid polypeptide reads, in one-letter code: Cytochrome c-552 (148 aa).

The first 17 residues, 1–17, serve as a signal peptide directing secretion; sequence MKRTLMAFLLLGGLALA. Gln-18 bears the Pyrrolidone carboxylic acid mark. Heme c-binding residues include Cys-28, Cys-31, His-32, and Met-86.

In terms of processing, binds 1 heme c group covalently per subunit.

In terms of biological role, this monoheme basic protein appears to function as an electron donor to cytochrome oxidase in T.thermophilus. This is Cytochrome c-552 (cycA) from Thermus thermophilus (strain ATCC 27634 / DSM 579 / HB8).